Here is an 80-residue protein sequence, read N- to C-terminus: uncharacterized protein (80 aa).

A signal peptide spans Met-1 to Ala-21. The interval Ala-59–Gln-80 is disordered. Over residues Asn-68–Gln-80 the composition is skewed to low complexity.

This is an uncharacterized protein from Escherichia coli O157:H7.